Here is a 360-residue protein sequence, read N- to C-terminus: MTVTLERRESTSLWERFCSWITSTENRLYIGWFGVLMIPCLLTATTVFIIAFIAAPPVDIDGIREPVSGSLLYGNNIITGAVVPTSNAIGLHLYPIWEAASLDEWLYNGGPYQLVVLHFLLGVAAYMGREWELSYRLGMRPWICVAFSAPVAAATAVFLIYPIGQGSFSDGMPLGISGTFNFMLVFQAEHNILMHPFHMAGVAGVFGGALFSAMHGSLVTSSLIRETTENESPNYGYKLGQEEETYNIVAAHGYFGRLIFQYASFNNSRALHFFLGLWPVVGIWLTSIGISTMAFNLNGLNFNQSIVDSQGRVINTWADIINRANLGIEVMHERNAHNFPLDLADNSLLPVASSSPSINS.

Helical transmembrane passes span 29-46, 118-133, and 142-156; these read YIGW…TATT, HFLL…EWEL, and WICV…AATA. Residue histidine 118 participates in chlorophyll a binding. Residue tyrosine 126 coordinates pheophytin a. The [CaMn4O5] cluster site is built by aspartate 170 and glutamate 189. A helical membrane pass occupies residues 197 to 218; it reads FHMAGVAGVFGGALFSAMHGSL. Histidine 198 contacts chlorophyll a. Residues histidine 215 and 264–265 contribute to the a quinone site; that span reads SF. Histidine 215 is a Fe cation binding site. Fe cation is bound at residue histidine 272. A helical transmembrane segment spans residues 274–288; sequence FLGLWPVVGIWLTSI. [CaMn4O5] cluster contacts are provided by histidine 332, glutamate 333, aspartate 342, and alanine 344. Positions 345 to 360 are excised as a propeptide; sequence DNSLLPVASSSPSINS.

Belongs to the reaction center PufL/M/PsbA/D family. In terms of assembly, PSII is composed of 1 copy each of membrane proteins PsbA, PsbB, PsbC, PsbD, PsbE, PsbF, PsbH, PsbI, PsbJ, PsbK, PsbL, PsbM, PsbT, PsbY, PsbZ, Psb30/Ycf12, at least 3 peripheral proteins of the oxygen-evolving complex and a large number of cofactors. It forms dimeric complexes. Requires The D1/D2 heterodimer binds P680, chlorophylls that are the primary electron donor of PSII, and subsequent electron acceptors. It shares a non-heme iron and each subunit binds pheophytin, quinone, additional chlorophylls, carotenoids and lipids. D1 provides most of the ligands for the Mn4-Ca-O5 cluster of the oxygen-evolving complex (OEC). There is also a Cl(-1) ion associated with D1 and D2, which is required for oxygen evolution. The PSII complex binds additional chlorophylls, carotenoids and specific lipids. as cofactor. Post-translationally, tyr-161 forms a radical intermediate that is referred to as redox-active TyrZ, YZ or Y-Z.

It is found in the plastid. Its subcellular location is the chloroplast thylakoid membrane. It catalyses the reaction 2 a plastoquinone + 4 hnu + 2 H2O = 2 a plastoquinol + O2. Photosystem II (PSII) is a light-driven water:plastoquinone oxidoreductase that uses light energy to abstract electrons from H(2)O, generating O(2) and a proton gradient subsequently used for ATP formation. It consists of a core antenna complex that captures photons, and an electron transfer chain that converts photonic excitation into a charge separation. The D1/D2 (PsbA/PsbD) reaction center heterodimer binds P680, the primary electron donor of PSII as well as several subsequent electron acceptors. This is Photosystem II protein D1 from Cyanidium caldarium (Red alga).